The following is a 110-amino-acid chain: PHD finger-like domain-containing protein 5B (110 aa).

This sequence belongs to the PHF5 family.

This is PHD finger-like domain-containing protein 5B from Arabidopsis thaliana (Mouse-ear cress).